The chain runs to 323 residues: Tyrosine recombinase XerD (323 aa).

The Core-binding (CB) domain maps to 21 to 106 (AEDDQAIQRF…TLRGFYALCL (86 aa)). The 191-residue stretch at 127 to 317 (SLPKALTESQ…ARQHLQTLHA (191 aa)) folds into the Tyr recombinase domain. Residues Arg-167, Lys-191, His-269, Arg-272, and His-295 contribute to the active site. Residue Tyr-304 is the O-(3'-phospho-DNA)-tyrosine intermediate of the active site.

This sequence belongs to the 'phage' integrase family. XerD subfamily. Forms a cyclic heterotetrameric complex composed of two molecules of XerC and two molecules of XerD.

The protein resides in the cytoplasm. Functionally, site-specific tyrosine recombinase, which acts by catalyzing the cutting and rejoining of the recombining DNA molecules. The XerC-XerD complex is essential to convert dimers of the bacterial chromosome into monomers to permit their segregation at cell division. It also contributes to the segregational stability of plasmids. This is Tyrosine recombinase XerD from Xanthomonas campestris pv. campestris (strain ATCC 33913 / DSM 3586 / NCPPB 528 / LMG 568 / P 25).